The primary structure comprises 201 residues: Putative manganese efflux pump MntP (201 aa).

Helical transmembrane passes span 6–26, 39–59, 105–125, 127–147, and 169–189; these read CLAVAVALAMDAFAVAIATGI, LAFHFGLFQALMPVAGWTLGL, LTLIMLAVATSIDALAVGLSL, VLGIDIVTPAIVIGVVCLLFT, and LAGGVVLIGIGLRILYEHGVF.

It belongs to the MntP (TC 9.B.29) family.

It localises to the cell inner membrane. Functionally, probably functions as a manganese efflux pump. The protein is Putative manganese efflux pump MntP of Nitratidesulfovibrio vulgaris (strain ATCC 29579 / DSM 644 / CCUG 34227 / NCIMB 8303 / VKM B-1760 / Hildenborough) (Desulfovibrio vulgaris).